The primary structure comprises 144 residues: Transcriptional regulator SlyA (144 aa).

The HTH marR-type domain occupies E2–K135. The H-T-H motif DNA-binding region spans Q49–E72.

This sequence belongs to the SlyA family. As to quaternary structure, homodimer.

Its function is as follows. Transcription regulator that can specifically activate or repress expression of target genes. The sequence is that of Transcriptional regulator SlyA from Sodalis glossinidius (strain morsitans).